Here is a 219-residue protein sequence, read N- to C-terminus: Large ribosomal subunit protein bL25 (219 aa).

The interval 194–219 is disordered; it reads SSTELEETPEVPASAVPTTDQGESAE. Positions 209–219 are enriched in polar residues; the sequence is VPTTDQGESAE.

Belongs to the bacterial ribosomal protein bL25 family. CTC subfamily. As to quaternary structure, part of the 50S ribosomal subunit; part of the 5S rRNA/L5/L18/L25 subcomplex. Contacts the 5S rRNA. Binds to the 5S rRNA independently of L5 and L18.

Its function is as follows. This is one of the proteins that binds to the 5S RNA in the ribosome where it forms part of the central protuberance. This is Large ribosomal subunit protein bL25 from Legionella pneumophila (strain Paris).